The sequence spans 168 residues: Peptidyl-Lys metalloendopeptidase (168 aa).

2 disulfide bridges follow: Cys6/Cys76 and Cys78/Cys98. Zn(2+) is bound at residue His118. Glu119 is an active-site residue. His122 and Asp131 together coordinate Zn(2+).

Requires Zn(2+) as cofactor.

Its subcellular location is the secreted. The enzyme catalyses Preferential cleavage in proteins: -Xaa-|-Lys- (in which Xaa may be Pro).. Its activity is regulated as follows. Inhibited by chelating agents such as EDTA and 1,10-phenanthroline. The sequence is that of Peptidyl-Lys metalloendopeptidase (MEP) from Pleurotus ostreatus (Oyster mushroom).